The sequence spans 29 residues: Cyclotide vibi-B (29 aa).

Positions 1-29 (GLPVCGETCFGGTCNTPGCTCSYPICTRN) form a cross-link, cyclopeptide (Gly-Asn). Disulfide bonds link Cys-5-Cys-19, Cys-9-Cys-21, and Cys-14-Cys-26.

In terms of processing, this is a cyclic peptide.

Probably participates in a plant defense mechanism. The polypeptide is Cyclotide vibi-B (Viola biflora (Yellow wood violet)).